A 403-amino-acid chain; its full sequence is Phosphoglycerate kinase (403 aa).

Substrate contacts are provided by residues 21–23 (DFN), Arg36, 59–62 (HLGR), Arg118, and Arg151. ATP is bound by residues Lys202, Glu328, and 354-357 (GGDS).

It belongs to the phosphoglycerate kinase family. As to quaternary structure, monomer.

Its subcellular location is the cytoplasm. It catalyses the reaction (2R)-3-phosphoglycerate + ATP = (2R)-3-phospho-glyceroyl phosphate + ADP. The protein operates within carbohydrate degradation; glycolysis; pyruvate from D-glyceraldehyde 3-phosphate: step 2/5. This chain is Phosphoglycerate kinase, found in Akkermansia muciniphila (strain ATCC BAA-835 / DSM 22959 / JCM 33894 / BCRC 81048 / CCUG 64013 / CIP 107961 / Muc).